The chain runs to 435 residues: uncharacterized protein (435 aa).

WD repeat units follow at residues 105–149 (DLEY…GIDS), 164–204 (HNNA…SKTQ), and 207–247 (AHDK…HSTI). Ser-266 is modified (phosphoserine). The WD 4 repeat unit spans residues 313–353 (GHKGDVNAVKWMPGSKSKLATCGDDCVVSLWDLDQPVNPSP). The interval 352-371 (SPAPTLSVSGTTPGMTGSTS) is disordered. Residues 358–371 (SVSGTTPGMTGSTS) are compositionally biased toward low complexity. Ser-388 carries the phosphoserine modification.

The protein resides in the cytoplasm. It is found in the golgi apparatus. This is an uncharacterized protein from Schizosaccharomyces pombe (strain 972 / ATCC 24843) (Fission yeast).